Consider the following 689-residue polypeptide: Glycine--tRNA ligase beta subunit (689 aa).

The protein belongs to the class-II aminoacyl-tRNA synthetase family. As to quaternary structure, tetramer of two alpha and two beta subunits.

It is found in the cytoplasm. It catalyses the reaction tRNA(Gly) + glycine + ATP = glycyl-tRNA(Gly) + AMP + diphosphate. The protein is Glycine--tRNA ligase beta subunit of Escherichia coli (strain K12 / MC4100 / BW2952).